The primary structure comprises 88 residues: Apolipoprotein C-I (88 aa).

Residues 1 to 26 form the signal peptide; that stretch reads MRLFLSLPVLVVVLAMVLEGPAPAQA.

The protein belongs to the apolipoprotein C1 family.

It is found in the secreted. Its function is as follows. Inhibitor of lipoprotein binding to the low density lipoprotein (LDL) receptor, LDL receptor-related protein, and very low density lipoprotein (VLDL) receptor. Associates with high density lipoproteins (HDL) and the triacylglycerol-rich lipoproteins in the plasma and makes up about 10% of the protein of the VLDL and 2% of that of HDL. Appears to interfere directly with fatty acid uptake and is also the major plasma inhibitor of cholesteryl ester transfer protein (CETP). Binds free fatty acids and reduces their intracellular esterification. Modulates the interaction of APOE with beta-migrating VLDL and inhibits binding of beta-VLDL to the LDL receptor-related protein. The sequence is that of Apolipoprotein C-I (APOC1) from Arctocephalus gazella (Antarctic fur seal).